The primary structure comprises 206 residues: Capsid assembly scaffolding protein (206 aa).

A propeptide spanning residues 1–13 (MEENKLKFNLQFF) is cleaved from the precursor. 3 disordered regions span residues 1 to 50 (MEEN…PEQQ), 83 to 134 (AAKL…VDSS), and 173 to 206 (RQSP…IIKN). 2 stretches are compositionally biased toward basic and acidic residues: residues 25–38 (GDGK…KEND) and 83–127 (AAKL…KMLS). Over residues 173–192 (RQSPLTGGDSFNHSTKNKPQ) the composition is skewed to polar residues. Residues 186-206 (STKNKPQNLAEIARQKRIIKN) form a helix-and-hook motif region.

In terms of assembly, found in the procapsid with the major capsid protein in a 2:1 capsid protein:scaffold protein molecular ratio. Post-translationally, the N-terminus is cleaved by ribosomal processing protease Prp.

Scaffolding protein involved in icosahedric procapsid assembly. Coassembles with capsid protein(s) to form the procapsid. The scaffolding protein is found within the capsid as a series of concentric shells. During DNA packaging, the scaffolding protein molecules are released from the procapsid. This Staphylococcus phage 80alpha protein is Capsid assembly scaffolding protein.